Here is a 371-residue protein sequence, read N- to C-terminus: Cytochrome b (371 aa).

4 consecutive transmembrane segments (helical) span residues 25-45, 69-90, 105-125, and 170-190; these read FGSMLLTCTALQISTGFFLAV, WIMQNLHAIGASLFFLCIYIHI, WLSGTTLLIILMATAFFGYVL, and FFALHFILPFLITSLSSIHII. Heme b-binding residues include His-75 and His-89. Residues His-174 and His-188 each contribute to the heme b site. His-193 serves as a coordination point for a ubiquinone. The next 4 helical transmembrane spans lie at 218–238, 280–300, 312–332, and 339–358; these read YKDMFMISSMITLLFIVLSFM, LGGTLALLMSVIILTTTPFTH, LTQALFWTLIATFITITWTAT, and FTLISQVASVTYFSFFIINP.

This sequence belongs to the cytochrome b family. As to quaternary structure, the cytochrome bc1 complex contains 3 respiratory subunits (MT-CYB, CYC1 and UQCRFS1), 2 core proteins (UQCRC1 and UQCRC2) and probably 6 low-molecular weight proteins. The cofactor is heme b.

It localises to the mitochondrion inner membrane. In terms of biological role, component of the ubiquinol-cytochrome c reductase complex (complex III or cytochrome b-c1 complex) that is part of the mitochondrial respiratory chain. The b-c1 complex mediates electron transfer from ubiquinol to cytochrome c. Contributes to the generation of a proton gradient across the mitochondrial membrane that is then used for ATP synthesis. The chain is Cytochrome b (MT-CYB) from Toxicocalamus preussi (Preuss's forest snake).